The chain runs to 326 residues: tRNA-modifying protein YgfZ (326 aa).

Trp-27 and Trp-189 together coordinate folate.

It belongs to the tRNA-modifying YgfZ family.

The protein localises to the cytoplasm. Its function is as follows. Folate-binding protein involved in regulating the level of ATP-DnaA and in the modification of some tRNAs. It is probably a key factor in regulatory networks that act via tRNA modification, such as initiation of chromosomal replication. This Salmonella typhimurium (strain LT2 / SGSC1412 / ATCC 700720) protein is tRNA-modifying protein YgfZ.